The primary structure comprises 129 residues: Small ribosomal subunit protein uS11 (129 aa).

The protein belongs to the universal ribosomal protein uS11 family. As to quaternary structure, part of the 30S ribosomal subunit. Interacts with proteins S7 and S18. Binds to IF-3.

Its function is as follows. Located on the platform of the 30S subunit, it bridges several disparate RNA helices of the 16S rRNA. Forms part of the Shine-Dalgarno cleft in the 70S ribosome. This Bradyrhizobium diazoefficiens (strain JCM 10833 / BCRC 13528 / IAM 13628 / NBRC 14792 / USDA 110) protein is Small ribosomal subunit protein uS11.